The chain runs to 105 residues: Large ribosomal subunit protein bL34m (105 aa).

The N-terminal 16 residues, 1-16 (MPLFARLCQPQSRRMF), are a transit peptide targeting the mitochondrion.

It belongs to the bacterial ribosomal protein bL34 family. Component of the mitochondrial large ribosomal subunit (mt-LSU). Mature yeast 74S mitochondrial ribosomes consist of a small (37S) and a large (54S) subunit. The 37S small subunit contains a 15S ribosomal RNA (15S mt-rRNA) and 34 different proteins. The 54S large subunit contains a 21S rRNA (21S mt-rRNA) and 46 different proteins.

The protein resides in the mitochondrion. Functionally, component of the mitochondrial ribosome (mitoribosome), a dedicated translation machinery responsible for the synthesis of mitochondrial genome-encoded proteins, including at least some of the essential transmembrane subunits of the mitochondrial respiratory chain. The mitoribosomes are attached to the mitochondrial inner membrane and translation products are cotranslationally integrated into the membrane. In Saccharomyces cerevisiae (strain ATCC 204508 / S288c) (Baker's yeast), this protein is Large ribosomal subunit protein bL34m.